The sequence spans 260 residues: Thiazole synthase (260 aa).

K96 serves as the catalytic Schiff-base intermediate with DXP. 1-deoxy-D-xylulose 5-phosphate is bound by residues G157, 184–185 (AG), and 206–207 (NT).

It belongs to the ThiG family. In terms of assembly, homotetramer. Forms heterodimers with either ThiH or ThiS.

The protein resides in the cytoplasm. It catalyses the reaction [ThiS sulfur-carrier protein]-C-terminal-Gly-aminoethanethioate + 2-iminoacetate + 1-deoxy-D-xylulose 5-phosphate = [ThiS sulfur-carrier protein]-C-terminal Gly-Gly + 2-[(2R,5Z)-2-carboxy-4-methylthiazol-5(2H)-ylidene]ethyl phosphate + 2 H2O + H(+). It functions in the pathway cofactor biosynthesis; thiamine diphosphate biosynthesis. In terms of biological role, catalyzes the rearrangement of 1-deoxy-D-xylulose 5-phosphate (DXP) to produce the thiazole phosphate moiety of thiamine. Sulfur is provided by the thiocarboxylate moiety of the carrier protein ThiS. In vitro, sulfur can be provided by H(2)S. The chain is Thiazole synthase from Rhodopseudomonas palustris (strain ATCC BAA-98 / CGA009).